Reading from the N-terminus, the 388-residue chain is Phosphoribosylformylglycinamidine cyclo-ligase, chloroplastic/mitochondrial (388 aa).

It belongs to the AIR synthase family.

Its subcellular location is the plastid. It is found in the chloroplast. The protein localises to the mitochondrion. The enzyme catalyses 2-formamido-N(1)-(5-O-phospho-beta-D-ribosyl)acetamidine + ATP = 5-amino-1-(5-phospho-beta-D-ribosyl)imidazole + ADP + phosphate + H(+). Its pathway is purine metabolism; IMP biosynthesis via de novo pathway; 5-amino-1-(5-phospho-D-ribosyl)imidazole from N(2)-formyl-N(1)-(5-phospho-D-ribosyl)glycinamide: step 2/2. The protein is Phosphoribosylformylglycinamidine cyclo-ligase, chloroplastic/mitochondrial (PUR5) of Vigna unguiculata (Cowpea).